The sequence spans 447 residues: Adenylosuccinate synthetase (447 aa).

GTP contacts are provided by residues 12 to 18 and 40 to 42; these read GDEGKGK and GHT. The active-site Proton acceptor is D13. Mg(2+)-binding residues include D13 and G40. IMP is bound by residues 13–16, 38–41, T128, R142, Q223, T238, and R302; these read DEGK and NAGH. H41 functions as the Proton donor in the catalytic mechanism. 298 to 304 serves as a coordination point for substrate; the sequence is TTTGRRR. Residues R304, 330-332, and 412-414 contribute to the GTP site; these read KLD and SLG.

Belongs to the adenylosuccinate synthetase family. In terms of assembly, homodimer. Mg(2+) serves as cofactor.

The protein resides in the cytoplasm. It carries out the reaction IMP + L-aspartate + GTP = N(6)-(1,2-dicarboxyethyl)-AMP + GDP + phosphate + 2 H(+). It functions in the pathway purine metabolism; AMP biosynthesis via de novo pathway; AMP from IMP: step 1/2. Its function is as follows. Plays an important role in the de novo pathway of purine nucleotide biosynthesis. Catalyzes the first committed step in the biosynthesis of AMP from IMP. In Thermosynechococcus vestitus (strain NIES-2133 / IAM M-273 / BP-1), this protein is Adenylosuccinate synthetase.